Here is a 345-residue protein sequence, read N- to C-terminus: MQLSDFSFELPDELIARYPLETRSASRLLHLDAKGQYHDHMFTDIIDLFEEGDLLVLNDTKVMKARLKGKRATGGAIEILVERMLNHTTAYCHIKASNSPKAGAELFVGADNIPVIVRGRHENLFVVEFSQPILPVLEQYGQLPIPPYFNREAEEIDTERYQTVFHNPEKIASVAAPTASLHFDEELLAKLDQKGVKKTFVTLHVGAGTFMPVRTDDITNHVMHSEWCDVPQETIDLILATKARGNKVIAVGTTATRALESAAQAHGGKIAAWTGDTQIFIYPGYEFCIVDRLITNFHLPESTLLMLVSALSNRENILAAYEHAVKDRYRFFSYGDAMLIDKLEV.

Belongs to the QueA family. Monomer.

Its subcellular location is the cytoplasm. The enzyme catalyses 7-aminomethyl-7-carbaguanosine(34) in tRNA + S-adenosyl-L-methionine = epoxyqueuosine(34) in tRNA + adenine + L-methionine + 2 H(+). The protein operates within tRNA modification; tRNA-queuosine biosynthesis. In terms of biological role, transfers and isomerizes the ribose moiety from AdoMet to the 7-aminomethyl group of 7-deazaguanine (preQ1-tRNA) to give epoxyqueuosine (oQ-tRNA). This is S-adenosylmethionine:tRNA ribosyltransferase-isomerase from Acinetobacter baumannii (strain ATCC 17978 / DSM 105126 / CIP 53.77 / LMG 1025 / NCDC KC755 / 5377).